A 212-amino-acid chain; its full sequence is Protein-L-isoaspartate O-methyltransferase (212 aa).

Residue serine 60 is part of the active site.

The protein belongs to the methyltransferase superfamily. L-isoaspartyl/D-aspartyl protein methyltransferase family.

The protein resides in the cytoplasm. It carries out the reaction [protein]-L-isoaspartate + S-adenosyl-L-methionine = [protein]-L-isoaspartate alpha-methyl ester + S-adenosyl-L-homocysteine. Its function is as follows. Catalyzes the methyl esterification of L-isoaspartyl residues in peptides and proteins that result from spontaneous decomposition of normal L-aspartyl and L-asparaginyl residues. It plays a role in the repair and/or degradation of damaged proteins. This Pseudomonas putida (strain W619) protein is Protein-L-isoaspartate O-methyltransferase.